Here is a 525-residue protein sequence, read N- to C-terminus: Histidine-rich glycoprotein (525 aa).

The first 18 residues, 1–18 (MKVLTTALLLVTLQCSHA), serve as a signal peptide directing secretion. The Cystatin 1 domain occupies 19-122 (LSPTNCDASE…ESQDLSVNGY (104 aa)). Intrachain disulfides connect Cys24-Cys504, Cys78-Cys89, Cys103-Cys124, Cys201-Cys414, and Cys216-Cys239. The segment at 41–84 (GRRSGYVFELLRVSDAHLDRAGTATVYYLALDVIESDCWVLSTK) is interaction with ATP5F1A. N-linked (GlcNAc...) asparagine glycans are attached at residues Asn112, Asn123, and Asn200. In terms of domain architecture, Cystatin 2 spans 135-240 (NTKDSPVLLD…TPDSIDINCE (106 aa)). The segment at 273–447 (GSRDHHHTHK…SRKRGPGKGL (175 aa)) is disordered. Over residues 293-303 (EGKDNSDRPRL) the composition is skewed to basic and acidic residues. Asn322 and Asn330 each carry an N-linked (GlcNAc...) asparagine glycan. Basic residues predominate over residues 339-404 (HGHRPHGHHP…GHHPHGHHPH (66 aa)). Residues 345-379 (GHHPHSHHPPGHHSHGHHPHGHHPHSHHSHGHHPP) are necessary for endothelial cell focal adhesions and anti-angiogenic activities. Ser438 is modified (phosphoserine).

In terms of assembly, interacts with THBS1 (via the TSP type I repeats); the interaction blocks the antiangiogenic effect of THBS1 with CD36. Interacts with HPSE; the interaction is enhanced at acidic pH, partially inhibits binding of HPSE to cell surface receptors and modulates its enzymatic activity. Interacts (via the HRR domain) with TMP1; the interaction partially mediates the antiangiogenic properties of HRG. Interacts with kappa and lambda light chains of IgG molecules. Interacts with ATP5F1A; the interaction occurs on the surface of T-cells and alters their cell morphology in concert with CONA. Binds IgG molecules containing kappa and lambda light chains and inhibits the formation of insoluble immunoglobulin complexes. Interacts with F12; the interaction, which is enhanced in the presence of zinc ions and inhibited by heparin-binding to HRG, inhibits factor XII autoactivation and contact-initiated coagulation. Interacts with PLG (via its Kringle domains); the interaction tethers PLG to the cell surface and enhances its activation. Interacts (via the HRR domain) with TPM1; the interaction appears to contribute to the antiangiogenic properties of the HRR domain. Interacts with THBS2; the interaction blocks the antiangiogenic effect of THBS2 with CD36. Zn(2+) is required as a cofactor. Proteolytic cleavage produces several HRG fragments which are mostly disulfide-linked and, therefore, not released. Cleavage by plasmin is inhibited in the presence of heparin, zinc ions or in an acidic environment. Cleavage reduces binding of HRG to heparan sulfate, but enhances the ability of HRG to bind and tether plasminogen to the cell surface. On platelet activation, releases a 33 kDa antiangiogenic peptide which encompasses the HRR. Also cleaved in the C-terminal by plasmin. In terms of processing, N-glycosylated. As to expression, expressed in liver, blood plasma, serum and in platelets. Also present in fibrin clots, wound fluid from acute wounds and chronic leg ulcers.

It localises to the secreted. Plasma glycoprotein that binds a number of ligands such as heme, heparin, heparan sulfate, thrombospondin, plasminogen, and divalent metal ions. Binds heparin and heparin/glycosaminoglycans in a zinc-dependent manner. Binds heparan sulfate on the surface of liver, lung, kidney and heart endothelial cells. Binds to N-sulfated polysaccharide chains on the surface of liver endothelial cells. Inhibits rosette formation. Acts as an adapter protein and is implicated in regulating many processes such as immune complex and pathogen clearance, cell chemotaxis, cell adhesion, angiogenesis, coagulation and fibrinolysis. Mediates clearance of necrotic cells through enhancing the phagocytosis of necrotic cells in a heparan sulfate-dependent pathway. This process can be regulated by the presence of certain HRG ligands such as heparin and zinc ions. Binds to IgG subclasses of immunoglobins containing kappa and lambda light chains with different affinities regulating their clearance and inhibiting the formation of insoluble immune complexes. Tethers plasminogen to the cell surface. Binds T-cells and alters the cell morphology. Acts as a regulator of the vascular endothelial growth factor (VEGF) signaling pathway; inhibits endothelial cell motility by reducing VEGF-induced complex formation between PXN/paxillin and ILK/integrin-linked protein kinase and by promoting inhibition of VEGF-induced tyrosine phosphorylation of focal adhesion kinases and alpha-actinins in endothelial cells. Also plays a role in the regulation of tumor angiogenesis and tumor immune surveillance. Normalizes tumor vessels and promotes antitumor immunity by polarizing tumor-associated macrophages, leading to decreased tumor growth and metastasis. Modulates angiogenesis by blocking the CD6-mediated antiangiongenic effect of thrombospondins, THBS1 and THBS2. The polypeptide is Histidine-rich glycoprotein (Hrg) (Mus musculus (Mouse)).